The chain runs to 67 residues: Alpha-toxin Tf3 (67 aa).

The LCN-type CS-alpha/beta domain occupies 2 to 63 (KDGYPVEGDN…EPTKTNGRCK (62 aa)). 4 cysteine pairs are disulfide-bonded: Cys12-Cys62, Cys16-Cys38, Cys24-Cys45, and Cys28-Cys47. Pro64 is modified (proline amide).

Belongs to the long (4 C-C) scorpion toxin superfamily. Sodium channel inhibitor family. Alpha subfamily. In terms of tissue distribution, expressed by the venom gland.

It is found in the secreted. Its function is as follows. Alpha toxins bind voltage-independently at site-3 of sodium channels (Nav) and inhibit the inactivation of the activated channels, thereby blocking neuronal transmission. This Tityus fasciolatus (Central Brazilian scorpion) protein is Alpha-toxin Tf3.